The chain runs to 146 residues: Large ribosomal subunit protein uL15 (146 aa).

Residues 1 to 58 are disordered; the sequence is MRLHELHPAPGSRPRATRVGRGIGSGLGKTSGRGHKGQKARSGGGVRRGFEGGQMPLT. Residues 21–31 are compositionally biased toward gly residues; sequence RGIGSGLGKTS.

This sequence belongs to the universal ribosomal protein uL15 family. As to quaternary structure, part of the 50S ribosomal subunit.

Its function is as follows. Binds to the 23S rRNA. This Moorella thermoacetica (strain ATCC 39073 / JCM 9320) protein is Large ribosomal subunit protein uL15.